A 732-amino-acid chain; its full sequence is Catalase-peroxidase (732 aa).

Positions Met1–Leu23 are disordered. A cross-link (tryptophyl-tyrosyl-methioninium (Trp-Tyr) (with M-246)) is located at residues Trp97–Tyr220. His98 (proton acceptor) is an active-site residue. Positions Tyr220–Met246 form a cross-link, tryptophyl-tyrosyl-methioninium (Tyr-Met) (with W-97). His261 contacts heme b.

Belongs to the peroxidase family. Peroxidase/catalase subfamily. Homodimer or homotetramer. Heme b is required as a cofactor. In terms of processing, formation of the three residue Trp-Tyr-Met cross-link is important for the catalase, but not the peroxidase activity of the enzyme.

The enzyme catalyses H2O2 + AH2 = A + 2 H2O. It catalyses the reaction 2 H2O2 = O2 + 2 H2O. Bifunctional enzyme with both catalase and broad-spectrum peroxidase activity. The sequence is that of Catalase-peroxidase from Prosthecochloris aestuarii (strain DSM 271 / SK 413).